Reading from the N-terminus, the 360-residue chain is Glutamate 5-kinase (360 aa).

Residue lysine 7 participates in ATP binding. 3 residues coordinate substrate: serine 47, aspartate 134, and asparagine 146. Residues 166–167 (TD) and 210–216 (TGGITTK) contribute to the ATP site. The PUA domain maps to 275 to 348 (VGQITLDEGA…LNKKENINSS (74 aa)).

This sequence belongs to the glutamate 5-kinase family.

It is found in the cytoplasm. The enzyme catalyses L-glutamate + ATP = L-glutamyl 5-phosphate + ADP. Its pathway is amino-acid biosynthesis; L-proline biosynthesis; L-glutamate 5-semialdehyde from L-glutamate: step 1/2. Functionally, catalyzes the transfer of a phosphate group to glutamate to form L-glutamate 5-phosphate. The chain is Glutamate 5-kinase from Prochlorococcus marinus subsp. pastoris (strain CCMP1986 / NIES-2087 / MED4).